The sequence spans 329 residues: tRNA(Ile)-lysidine synthase, chloroplastic (329 aa).

32-37 (SGGQDS) provides a ligand contact to ATP.

It belongs to the tRNA(Ile)-lysidine synthase family.

The protein resides in the plastid. It is found in the chloroplast. It carries out the reaction cytidine(34) in tRNA(Ile2) + L-lysine + ATP = lysidine(34) in tRNA(Ile2) + AMP + diphosphate + H(+). Ligates lysine onto the cytidine present at position 34 of the AUA codon-specific tRNA(Ile) that contains the anticodon CAU, in an ATP-dependent manner. Cytidine is converted to lysidine, thus changing the amino acid specificity of the tRNA from methionine to isoleucine. This Pyropia yezoensis (Susabi-nori) protein is tRNA(Ile)-lysidine synthase, chloroplastic.